The sequence spans 154 residues: 6,7-dimethyl-8-ribityllumazine synthase (154 aa).

5-amino-6-(D-ribitylamino)uracil contacts are provided by residues F22, 56 to 58, and 80 to 82; these read AFE and AVI. 85 to 86 is a binding site for (2S)-2-hydroxy-3-oxobutyl phosphate; it reads ST. H88 (proton donor) is an active-site residue. A 5-amino-6-(D-ribitylamino)uracil-binding site is contributed by F113. R127 is a binding site for (2S)-2-hydroxy-3-oxobutyl phosphate.

The protein belongs to the DMRL synthase family.

The enzyme catalyses (2S)-2-hydroxy-3-oxobutyl phosphate + 5-amino-6-(D-ribitylamino)uracil = 6,7-dimethyl-8-(1-D-ribityl)lumazine + phosphate + 2 H2O + H(+). It participates in cofactor biosynthesis; riboflavin biosynthesis; riboflavin from 2-hydroxy-3-oxobutyl phosphate and 5-amino-6-(D-ribitylamino)uracil: step 1/2. Functionally, catalyzes the formation of 6,7-dimethyl-8-ribityllumazine by condensation of 5-amino-6-(D-ribitylamino)uracil with 3,4-dihydroxy-2-butanone 4-phosphate. This is the penultimate step in the biosynthesis of riboflavin. The protein is 6,7-dimethyl-8-ribityllumazine synthase of Clostridium kluyveri (strain NBRC 12016).